We begin with the raw amino-acid sequence, 829 residues long: Cation/H(+) antiporter 14 (829 aa).

12 helical membrane-spanning segments follow: residues Y48–Y68, G77–S97, S117–I137, I145–F165, I180–A200, N215–L235, L240–C260, I281–G301, L329–T349, I361–Y383, F392–W412, and L425–Y445. S827 is subject to Phosphoserine.

Belongs to the monovalent cation:proton antiporter 2 (CPA2) transporter (TC 2.A.37) family. CHX (TC 2.A.37.4) subfamily. In terms of tissue distribution, preferentially expressed in pollen but also detected in vegetative tissues like leaf trichomes and root vascular tissues.

Its subcellular location is the membrane. May operate as a cation/H(+) antiporter. The protein is Cation/H(+) antiporter 14 (CHX14) of Arabidopsis thaliana (Mouse-ear cress).